Here is a 450-residue protein sequence, read N- to C-terminus: Glutamyl-tRNA(Gln) amidotransferase subunit A, mitochondrial (450 aa).

Residues lysine 47 and serine 122 each act as charge relay system in the active site. Serine 146 acts as the Acyl-ester intermediate in catalysis.

Belongs to the amidase family. GatA subfamily. As to quaternary structure, subunit of the heterotrimeric GatFAB amidotransferase (AdT) complex, composed of A, B and F subunits.

It is found in the mitochondrion. It carries out the reaction L-glutamyl-tRNA(Gln) + L-glutamine + ATP + H2O = L-glutaminyl-tRNA(Gln) + L-glutamate + ADP + phosphate + H(+). Functionally, allows the formation of correctly charged Gln-tRNA(Gln) through the transamidation of misacylated Glu-tRNA(Gln) in the mitochondria. The reaction takes place in the presence of glutamine and ATP through an activated gamma-phospho-Glu-tRNA(Gln). In Candida albicans (strain SC5314 / ATCC MYA-2876) (Yeast), this protein is Glutamyl-tRNA(Gln) amidotransferase subunit A, mitochondrial.